Here is a 213-residue protein sequence, read N- to C-terminus: Small ribosomal subunit protein uS3 (213 aa).

Residues 38-106 enclose the KH type-2 domain; the sequence is IREYLENRLS…RVHINIVEIK (69 aa).

Belongs to the universal ribosomal protein uS3 family. In terms of assembly, part of the 30S ribosomal subunit. Forms a tight complex with proteins S10 and S14.

Its function is as follows. Binds the lower part of the 30S subunit head. Binds mRNA in the 70S ribosome, positioning it for translation. The protein is Small ribosomal subunit protein uS3 of Oceanobacillus iheyensis (strain DSM 14371 / CIP 107618 / JCM 11309 / KCTC 3954 / HTE831).